The primary structure comprises 278 residues: Protein mtd-1 (278 aa).

A signal peptide spans 1 to 17; it reads MRSSLLLLVFFLSIGWA. Topologically, residues 18-254 are extracellular; that stretch reads RYCVHNEKSW…EMLEEIEARK (237 aa). N40, N73, N163, and N190 each carry an N-linked (GlcNAc...) asparagine glycan. A helical membrane pass occupies residues 255 to 271; sequence VPVDSSAPVNIILSIAF. Residues 272 to 278 lie on the Cytoplasmic side of the membrane; that stretch reads SIFLIHF.

The protein resides in the cell membrane. Functionally, plays a role in mechanosensory transduction (touch sensitivity). This is Protein mtd-1 from Caenorhabditis elegans.